Consider the following 240-residue polypeptide: Large ribosomal subunit protein bL25 (240 aa).

The segment at 1-23 is disordered; the sequence is MATVKELKATARPKAGKGAARAE. Positions 10 to 19 are enriched in low complexity; it reads TARPKAGKGA.

Belongs to the bacterial ribosomal protein bL25 family. CTC subfamily. In terms of assembly, part of the 50S ribosomal subunit; part of the 5S rRNA/L5/L18/L25 subcomplex. Contacts the 5S rRNA. Binds to the 5S rRNA independently of L5 and L18.

Its function is as follows. This is one of the proteins that binds to the 5S RNA in the ribosome where it forms part of the central protuberance. This Afipia carboxidovorans (strain ATCC 49405 / DSM 1227 / KCTC 32145 / OM5) (Oligotropha carboxidovorans) protein is Large ribosomal subunit protein bL25.